The following is a 374-amino-acid chain: Ribosomal RNA large subunit methyltransferase G (374 aa).

This sequence belongs to the methyltransferase superfamily. RlmG family.

It localises to the cytoplasm. It catalyses the reaction guanosine(1835) in 23S rRNA + S-adenosyl-L-methionine = N(2)-methylguanosine(1835) in 23S rRNA + S-adenosyl-L-homocysteine + H(+). Specifically methylates the guanine in position 1835 (m2G1835) of 23S rRNA. The chain is Ribosomal RNA large subunit methyltransferase G from Pseudomonas aeruginosa (strain UCBPP-PA14).